A 354-amino-acid polypeptide reads, in one-letter code: Protein RecA (354 aa).

ATP is bound at residue 65–72 (GPESSGKT).

This sequence belongs to the RecA family.

The protein resides in the cytoplasm. Functionally, can catalyze the hydrolysis of ATP in the presence of single-stranded DNA, the ATP-dependent uptake of single-stranded DNA by duplex DNA, and the ATP-dependent hybridization of homologous single-stranded DNAs. It interacts with LexA causing its activation and leading to its autocatalytic cleavage. In Vibrio cholerae serotype O1 (strain ATCC 39315 / El Tor Inaba N16961), this protein is Protein RecA.